The chain runs to 131 residues: MSWQTYVDDHLMCEIEGNHLSAAAIIGQDGSVWAQSATFPQLKPEEVTGIVRDFDEPGTLAPTGLYLGGTKYMVIQGEPGAVIRGKKGPGGVTVKKTTLALLIGIYDEPMTPGQCNMIVERLGDYLVEQGL.

Belongs to the profilin family. Occurs in many kinds of cells as a complex with monomeric actin in a 1:1 ratio.

The protein localises to the cytoplasm. It is found in the cytoskeleton. Functionally, binds to actin and affects the structure of the cytoskeleton. At high concentrations, profilin prevents the polymerization of actin, whereas it enhances it at low concentrations. By binding to PIP2, it inhibits the formation of IP3 and DG. This is Profilin from Fragaria ananassa (Strawberry).